The chain runs to 228 residues: Interleukin-27 subunit beta (228 aa).

The first 18 residues, 1 to 18, serve as a signal peptide directing secretion; that stretch reads MSKLLFLSLALWASRSPG. Fibronectin type-III domains lie at 26 to 124 and 127 to 224; these read ALSQ…VAER and KPDP…VESA. N-linked (GlcNAc...) asparagine glycosylation is found at N54 and N104.

Belongs to the type I cytokine receptor family. Type 3 subfamily. Heterodimer with IL27/IL27A; not disulfide-linked. This heterodimer is known as interleukin IL-27. Heterodimer with IL12A; not disulfide-linked. This heterodimer is known as interleukin IL-35. Interacts with SQSTM1.

Its subcellular location is the secreted. Functionally, associates with IL27 to form the IL-27 interleukin, a heterodimeric cytokine which functions in innate immunity. IL-27 has pro- and anti-inflammatory properties, that can regulate T-helper cell development, suppress T-cell proliferation, stimulate cytotoxic T-cell activity, induce isotype switching in B-cells, and that has diverse effects on innate immune cells. Among its target cells are CD4 T-helper cells which can differentiate in type 1 effector cells (TH1), type 2 effector cells (TH2) and IL17 producing helper T-cells (TH17). It drives rapid clonal expansion of naive but not memory CD4 T-cells. It also strongly synergizes with IL-12 to trigger interferon-gamma/IFN-gamma production of naive CD4 T-cells, binds to the cytokine receptor WSX-1/TCCR. Another important role of IL-27 is its antitumor activity as well as its antiangiogenic activity with activation of production of antiangiogenic chemokines. This is Interleukin-27 subunit beta (Ebi3) from Mus musculus (Mouse).